The following is an 860-amino-acid chain: Transforming growth factor-beta receptor-associated protein 1 (860 aa).

Residues 24–297 (RVNIECVECC…HILQDFEGRV (274 aa)) enclose the CNH domain. One copy of the CHCR repeat lies at 564–728 (RPLDEQQKNS…LLAIYLHAGP (165 aa)).

It belongs to the TRAP1 family. In terms of assembly, interacts with TGFBR2 and ACVR2B; in the absence of ligand stimulation. Interacts with TGFBR1, ACVRL1, BMPR1A and ACVR1B; in the absence of ligand stimulation and to a less extent. Interacts with SMAD4; the interaction seems to be mutually exclusive with the interaction of SMAD4 and phosphorylated SMAD2. May interact with ALOX5. Interacts with RAB5C. Interacts with VPS8, VPS11 and VPS16. Component of the putative class C core vacuole/endosome tethering (CORVET) complex; the core of which composed of the class C Vps proteins VPS11, VPS16, VPS18 and VPS33A, is associated with VPS8 and TGFBRAP1.

The protein localises to the cytoplasm. Its subcellular location is the early endosome. Functionally, plays a role in the TGF-beta/activin signaling pathway. It associates with inactive heteromeric TGF-beta and activin receptor complexes, mainly through the type II receptor, and is released upon activation of signaling. May recruit SMAD4 to the vicinity of the receptor complex and facilitate its interaction with receptor-regulated Smads, such as SMAD2. Its function is as follows. Plays a role in vesicle-mediated protein trafficking of the endocytic membrane transport pathway. Believed to act as a component of the putative CORVET endosomal tethering complexes which is proposed to be involved in the Rab5-to-Rab7 endosome conversion probably implicating MON1A/B, and via binding SNAREs and SNARE complexes to mediate tethering and docking events during SNARE-mediated membrane fusion. The CORVET complex is proposed to function as a Rab5 effector to mediate early endosome fusion probably in specific endosome subpopulations. Functions predominantly in APPL1-containing endosomes and in degradative but not recycling trafficking of endocytosed cargo. This is Transforming growth factor-beta receptor-associated protein 1 (TGFBRAP1) from Homo sapiens (Human).